A 446-amino-acid polypeptide reads, in one-letter code: MSLRLSSGSKRSYARPSTGSLRGASFGAANACGVAGIGSGFSCAFGSSSTGGNTGVANSCAGFTVNEGGLLSGNEKVTMQNLNDRLASYLDNVQALQEANADLEQKIKGWYEKFGPGSCRGLDHDYSRYFPIIDDLKNQIITSTTSNANAVLQIDNARLTADDFRLKYENELALHQSVEADVNGLRRVLDEITLCRTDLEIQYETLSEELTYLKKNHKEEMQALQCAAGGNVNVEMNAAPGVDLTVLLNNMRAEYEALAEQNRRDAEAWFQEKSASLQQQITEDVGATTSARNELTEMKRTLQTLEIELQSLLATKHSLECSLTETEGNYCTQLAQIQAQISALEEQLHQVRTETEGQKLEYEQLLNVKAHLEKEIETYCLLIGGDEGACKSSSYKSKDYTSGNAGNQSKDSPKAIVVKKVLEEVDQRSKILTTRLHSLEEKSQSN.

The interval 1–20 (MSLRLSSGSKRSYARPSTGS) is disordered. The segment at 1–74 (MSLRLSSGSK…VNEGGLLSGN (74 aa)) is head. The coil 1A stretch occupies residues 75–110 (EKVTMQNLNDRLASYLDNVQALQEANADLEQKIKGW). The 316-residue stretch at 75–390 (EKVTMQNLND…LLIGGDEGAC (316 aa)) folds into the IF rod domain. Positions 111–132 (YEKFGPGSCRGLDHDYSRYFPI) are linker 1. The tract at residues 133–224 (IDDLKNQIIT…KNHKEEMQAL (92 aa)) is coil 1B. A linker 12 region spans residues 225-247 (QCAAGGNVNVEMNAAPGVDLTVL). The segment at 248–386 (LNNMRAEYEA…ETYCLLIGGD (139 aa)) is coil 2. The tract at residues 387–446 (EGACKSSSYKSKDYTSGNAGNQSKDSPKAIVVKKVLEEVDQRSKILTTRLHSLEEKSQSN) is tail. A disordered region spans residues 394–413 (SYKSKDYTSGNAGNQSKDSP). Positions 400–410 (YTSGNAGNQSK) are enriched in polar residues. Ser438 carries the post-translational modification Phosphoserine.

This sequence belongs to the intermediate filament family. As to quaternary structure, heterodimer of a type I and a type II keratin. Heterodimer with type II keratin KRT5 leading to the formation of keratin intermediate filament (KIF) network. Interacts with KRT6A to form filaments.

The protein resides in the cytoplasm. In terms of biological role, essential for the proper assembly of type I and type II keratin protein complexes and formation of keratin intermediate filaments in the inner root sheath (irs). Plays a role in the cytoskeleton organization. The polypeptide is Keratin, type I cytoskeletal 25 (Rattus norvegicus (Rat)).